Reading from the N-terminus, the 219-residue chain is Ran-specific GTPase-activating protein 1 (219 aa).

Basic and acidic residues-rich tracts occupy residues 1–12 (MAEVERKEEQAK), 33–45 (AVGD…EAKK), and 57–72 (PRKD…DNID). The segment at 1 to 72 (MAEVERKEEQ…KGGEERDNID (72 aa)) is disordered. One can recognise a RanBD1 domain in the interval 70–210 (NIDAAEVVEK…YDLGRAHNEK (141 aa)).

This sequence belongs to the RANBP1 family.

Its subcellular location is the cytoplasm. The protein localises to the nucleus. Its function is as follows. Important for the export of protein containing nuclear export signal (NES) out of the nucleus. The chain is Ran-specific GTPase-activating protein 1 (YRB1) from Encephalitozoon cuniculi (strain GB-M1) (Microsporidian parasite).